The chain runs to 496 residues: MDPLGARSCFVDADILPCWADVSNEEGEDVPDGGRKDVPDGGSHSPFPYRKDINEKVILWKGDVALLNCTALVNTSNETLTDKNPVSDSIFRYSGPELLEEMQKLKGCRTGEAKLTKGFNLAARYIIHTVGPKYKTKYRTAAESSLYSCYRNVLQLAKEQGMASVGFCVITTQKRCYPLDDATHIALRTVRRFLEVHGQALEKVVFAVTEEEEGTYRRLLPLYFPRSLEEEQRSILLLPQDIGNSDGEPVVPERQIRISEKPGVQEEDSEEEGLVKDLSVIGSHAFARMEGDVDKQRRLALQGQLSGAAMQKQHQRNYNRWLSRARTEDLSDIAALKALYQSGVDNCGRSVMVVVGRNIPVLLIDMEKALLYFIHMMDHVTAKDYVLVYFHTLTGEHNHLDSDFLKNMYDIIDVKYKKNLKALYFVHPTFRSKVSTWFFTTFTVSGLKDKVHQVESLHQLFTAIPPEQIEIPPFVLDYDARENGPLFTSQSSFLSL.

The interval 25–48 (EEGEDVPDGGRKDVPDGGSHSPFP) is disordered. The region spanning 44–224 (HSPFPYRKDI…TYRRLLPLYF (181 aa)) is the Macro domain. A CRAL-TRIO domain is found at 329–483 (DLSDIAALKA…FVLDYDAREN (155 aa)).

This sequence belongs to the GDAP2 family.

The protein is Ganglioside-induced differentiation-associated protein 2 of Xenopus laevis (African clawed frog).